A 702-amino-acid polypeptide reads, in one-letter code: A-type inclusion protein A25 homolog (702 aa).

A disordered region spans residues 342 to 380; that stretch reads TNTGIEEPHATGGDKEDQPIKVVHPPNNDKDDAIKSYNP. A compositionally biased stretch (basic and acidic residues) spans 347–360; it reads EEPHATGGDKEDQP. Coiled coils occupy residues 420 to 522 and 548 to 692; these read NGGE…RDGK and EIDK…NNKT.

This sequence belongs to the poxviridae A25 protein family. As to quaternary structure, interacts (via N-terminus) with protein A26.

It is found in the virion. Its function is as follows. Structural protein that forms a matrix surrounding the mature virion (MV) through interaction with protein A26. Presence of protein A25 in the virion structurally prevents direct virus-cell fusion mechanism. This chain is A-type inclusion protein A25 homolog, found in Variola virus (isolate Human/India/Ind3/1967) (VARV).